A 326-amino-acid polypeptide reads, in one-letter code: Pyruvate dehydrogenase E1 component subunit beta (326 aa).

Glutamate 62 lines the thiamine diphosphate pocket.

Heterodimer of an alpha and a beta chain. It depends on thiamine diphosphate as a cofactor.

It carries out the reaction N(6)-[(R)-lipoyl]-L-lysyl-[protein] + pyruvate + H(+) = N(6)-[(R)-S(8)-acetyldihydrolipoyl]-L-lysyl-[protein] + CO2. Its function is as follows. The pyruvate dehydrogenase complex catalyzes the overall conversion of pyruvate to acetyl-CoA and CO(2). It contains multiple copies of three enzymatic components: pyruvate dehydrogenase (E1), dihydrolipoamide acetyltransferase (E2) and lipoamide dehydrogenase (E3). This is Pyruvate dehydrogenase E1 component subunit beta (pdhB) from Mycoplasma genitalium (strain ATCC 33530 / DSM 19775 / NCTC 10195 / G37) (Mycoplasmoides genitalium).